Reading from the N-terminus, the 666-residue chain is L-aspartate N-monooxygenase (nitrosuccinate-forming) (666 aa).

Residues 645–666 form a disordered region; sequence LPAYEDPGVRCPSDDRLTEVTA. Over residues 656–666 the composition is skewed to basic and acidic residues; it reads PSDDRLTEVTA.

It belongs to the nitrosuccinic acid synthase family. Requires FAD as cofactor.

The catalysed reaction is L-aspartate + 3 NADPH + 3 O2 + 2 H(+) = 2-nitrobutanedioate + 3 NADP(+) + 4 H2O. Its pathway is antibiotic biosynthesis. In terms of biological role, part of a gene cluster involved in the biosynthesis of cremeomycin, a light-sensitive o-diazoquinone with antibacterial and antiproliferative effects. Catalyzes the iterative oxidation of L-aspartic acid to nitrosuccinic acid (2-nitrobutanedioate) via N-hydroxyaspartic acid and nitrososuccinic acid. This Streptomyces cremeus protein is L-aspartate N-monooxygenase (nitrosuccinate-forming).